Here is a 301-residue protein sequence, read N- to C-terminus: MPIKIPDNLPAAKTLNEENIFFMDEDRAYHQDIRPLNIVIVNLMPTKIVTETQILRLIGNSPLQVNPTFIHTQTHKSQNTSKEHLIKFYETFEEIKNNKFDGMIVTGAPVETLSFENVDYWEELCRIFDWSVTNVTSTIHICWGAQAGLYHHYGIPKYELHEKLFGVFKHNLTERNIKLTRGFDDEFYAPHSRHTYVKREDIKKNPSLKILAESDEAGAYIVASENGKNIFVMGHAEYDGDTLNLEYIRDKNQGMNIKIPKNYFKDNDPEKGPMVTWRGHANLLFSNWLNYYVYQETPFEL.

The active-site Acyl-thioester intermediate is Cys-142. Substrate contacts are provided by Lys-163 and Ser-192. The Proton acceptor role is filled by His-235. The active site involves Glu-237. Arg-249 provides a ligand contact to substrate.

The protein belongs to the MetA family.

It localises to the cytoplasm. The catalysed reaction is L-homoserine + acetyl-CoA = O-acetyl-L-homoserine + CoA. The protein operates within amino-acid biosynthesis; L-methionine biosynthesis via de novo pathway; O-acetyl-L-homoserine from L-homoserine: step 1/1. Transfers an acetyl group from acetyl-CoA to L-homoserine, forming acetyl-L-homoserine. This is Homoserine O-acetyltransferase from Clostridium acetobutylicum (strain ATCC 824 / DSM 792 / JCM 1419 / IAM 19013 / LMG 5710 / NBRC 13948 / NRRL B-527 / VKM B-1787 / 2291 / W).